The sequence spans 298 residues: D-alanine--D-alanine ligase (298 aa).

Residues 97–290 (FYSLFKNYIQ…FDELINIIIK (194 aa)) enclose the ATP-grasp domain. Residue 124–173 (PFIIKPRKSGSSKGVYIIHNENEYKFYLEKDLKEFQEVLVQEYIKGREIT) participates in ATP binding. D245, E257, and N259 together coordinate Mg(2+).

This sequence belongs to the D-alanine--D-alanine ligase family. It depends on Mg(2+) as a cofactor. Mn(2+) is required as a cofactor.

Its subcellular location is the cytoplasm. It catalyses the reaction 2 D-alanine + ATP = D-alanyl-D-alanine + ADP + phosphate + H(+). It functions in the pathway cell wall biogenesis; peptidoglycan biosynthesis. Cell wall formation. In Petrotoga mobilis (strain DSM 10674 / SJ95), this protein is D-alanine--D-alanine ligase.